The chain runs to 235 residues: Ribonuclease PH (235 aa).

Residues arginine 86 and 124-126 contribute to the phosphate site; that span reads GTR.

Belongs to the RNase PH family. Homohexameric ring arranged as a trimer of dimers.

It catalyses the reaction tRNA(n+1) + phosphate = tRNA(n) + a ribonucleoside 5'-diphosphate. Its function is as follows. Phosphorolytic 3'-5' exoribonuclease that plays an important role in tRNA 3'-end maturation. Removes nucleotide residues following the 3'-CCA terminus of tRNAs; can also add nucleotides to the ends of RNA molecules by using nucleoside diphosphates as substrates, but this may not be physiologically important. Probably plays a role in initiation of 16S rRNA degradation (leading to ribosome degradation) during starvation. This Legionella pneumophila (strain Paris) protein is Ribonuclease PH.